The following is a 272-amino-acid chain: Glutamate racemase (272 aa).

Residues 10-11 (DS) and 42-43 (YG) each bind substrate. Cys74 acts as the Proton donor/acceptor in catalysis. 75–76 (NT) is a substrate binding site. Cys185 (proton donor/acceptor) is an active-site residue. 186 to 187 (TH) contributes to the substrate binding site.

The protein belongs to the aspartate/glutamate racemases family.

It carries out the reaction L-glutamate = D-glutamate. It participates in cell wall biogenesis; peptidoglycan biosynthesis. Its function is as follows. Provides the (R)-glutamate required for cell wall biosynthesis. This Bacillus velezensis (strain DSM 23117 / BGSC 10A6 / LMG 26770 / FZB42) (Bacillus amyloliquefaciens subsp. plantarum) protein is Glutamate racemase.